Reading from the N-terminus, the 359-residue chain is Ribosomal RNA large subunit methyltransferase M (359 aa).

S-adenosyl-L-methionine-binding positions include Ser186, Cys219–Gly222, Asp238, Asp258, and Asp275. The active-site Proton acceptor is Lys304.

The protein belongs to the class I-like SAM-binding methyltransferase superfamily. RNA methyltransferase RlmE family. RlmM subfamily. In terms of assembly, monomer.

It is found in the cytoplasm. It catalyses the reaction cytidine(2498) in 23S rRNA + S-adenosyl-L-methionine = 2'-O-methylcytidine(2498) in 23S rRNA + S-adenosyl-L-homocysteine + H(+). Its function is as follows. Catalyzes the 2'-O-methylation at nucleotide C2498 in 23S rRNA. The sequence is that of Ribosomal RNA large subunit methyltransferase M from Vibrio parahaemolyticus serotype O3:K6 (strain RIMD 2210633).